A 424-amino-acid polypeptide reads, in one-letter code: Interleukin-13 receptor subunit alpha-1 (424 aa).

A signal peptide spans 1-25 (MARPALLGELLVLLLWTATVGQVAA). The Extracellular portion of the chain corresponds to 26–340 (ATEVQPPVTN…QSIGKEQNST (315 aa)). Positions 32 to 121 (PVTNLSVSVE…VKKCISPPEG (90 aa)) constitute a Fibronectin type-III 1 domain. N-linked (GlcNAc...) asparagine glycosylation is found at Asn35, Asn59, Asn103, and Asn136. Residues Cys44 and Cys93 are joined by a disulfide bond. Disulfide bonds link Cys132/Cys142 and Cys171/Cys183. A Fibronectin type-III 2 domain is found at 224–336 (KPDPPHIKHL…WSEAQSIGKE (113 aa)). Residue Asn262 is glycosylated (N-linked (GlcNAc...) asparagine). Residues 324–328 (WSDWS) carry the WSXWS motif motif. Asn338 carries an N-linked (GlcNAc...) asparagine glycan. A helical transmembrane segment spans residues 341–364 (FYTTMLLTIPVFVAVAVIILLFYL). The Cytoplasmic segment spans residues 365–424 (KRLKIIIFPPIPDPGKIFKEMFGDQNDDTLHWKKYDIYEKQSKEETDSVVLIENLKKAAP). The short motif at 371-379 (IFPPIPDPG) is the Box 1 motif element.

It belongs to the type I cytokine receptor family. Type 5 subfamily. As to quaternary structure, interleukin-13 receptor is a complex of IL4R, IL13RA1, and possibly other components. Interacts with TRAF3IP1. Interacts with IL4. Spleen, liver, thymus, heart, lung, kidney, testis, stomach, brain, skin, and colon; but not skeletal muscle.

It localises to the membrane. Binds with low affinity to interleukin-13 (IL13). Together with IL4RA can form a functional receptor for IL13. Also serves as an alternate accessory protein to the common cytokine receptor gamma chain for interleukin-4 (IL4) signaling, but cannot replace the function of IL2RG in allowing enhanced interleukin-2 (IL2) binding activity. The protein is Interleukin-13 receptor subunit alpha-1 (Il13ra1) of Mus musculus (Mouse).